A 154-amino-acid chain; its full sequence is Leghemoglobin-2 (154 aa).

Residues 3–151 (ALTESQAALV…LAIVIKKEMN (149 aa)) enclose the Globin domain. Ser-46 is a heme b binding site. Ser-46 carries the phosphoserine modification. His-64 is an O2 binding site. The heme b site is built by Lys-67, His-98, and Lys-101. The residue at position 139 (Tyr-139) is a Nitrated tyrosine.

This sequence belongs to the plant globin family. In terms of assembly, monomer. In terms of processing, nitrated in effective nodules and particularly in hypoxic conditions; this mechanism may play a protective role in the symbiosis by buffering toxic peroxynitrite NO(2)(-). Nitration level decrease during nodule senescence. Post-translationally, phosphorylation at Ser-46 disrupts the molecular environment of its porphyrin ring oxygen binding pocket, thus leading to a reduced oxygen consumption and to the delivery of oxygen O(2) to symbiosomes. In terms of tissue distribution, root nodules.

The protein resides in the cytoplasm. Its subcellular location is the cytosol. It localises to the nucleus. In terms of biological role, leghemoglobin that reversibly binds oxygen O(2) through a pentacoordinated heme iron. In root nodules, facilitates the diffusion of oxygen to the bacteroids while preventing the bacterial nitrogenase from being inactivated by buffering dioxygen, nitric oxide and carbon monoxide, and promoting the formation of reactive oxygen species (ROS, e.g. H(2)O(2)). This role is essential for symbiotic nitrogen fixation (SNF). The polypeptide is Leghemoglobin-2 (Lupinus luteus (European yellow lupine)).